A 662-amino-acid polypeptide reads, in one-letter code: MFNEKDQLAIDTIRALSIDAIEKANSGHPGLPMGAAPMAYTLWTRHLNFNPQSKDFFNRDRFILSAGHGSALLYSLLHVSGSLELEELKQFRQWGSKTPGHPEYRHTDGVEVTTGPLGQGFAMSVGMALAESHLAGKFNKDQFDIVNHYTYVLASDGDLMEGISHEAASFAGHNQLDKLIVLYDSNDISLDGDLDKSFSEDTKQRFEAYGWNYILVENGNDLDEIDNAITQAKSQQGPTIIEVKTIIGFGSPNKAGSNGVHGAPLGEEERALTFKEYGLDPEKRFNVPEDVYEIFKSTMLKRANENEEAWNNMLKNYSEAYPELAEEFKLAMSGKLPNNYADALPEYDLNHSGASRADSGEIIQKLSEFVPSFFGGSADLAGSNKSNVKEAKDYNKDTPEGKNVWFGVREFAMGAAINGMAAHGGLHPYAATFFVFSDYLKPALRLSSIMGLNSTFIFTHDSIAVGEDGPTHEPIEQLAGLRAIPNMNVIRPADGNETRVAWEVALESEHTPTSLVLTRQNLPTLDVDKQTVENGVRKGAYIVFETEQQLEYLLLASGSEVNLAVEAAKELEQQGKGVRVISMPNWYAFEQQSSEYKESILPSDVTKRIAIEMASPLGWHKYVGIEGKVIGINSFGASAPGDLVVEKYGFTKENILKQVRSL.

His28 serves as a coordination point for substrate. Residues His68 and 115-117 contribute to the thiamine diphosphate site; that span reads GPL. Mg(2+) is bound at residue Asp156. Residues Gly157 and Asn186 each contribute to the thiamine diphosphate site. Mg(2+) is bound by residues Asn186 and Ile188. Positions 261, 356, and 383 each coordinate substrate. His261 is a binding site for thiamine diphosphate. Catalysis depends on Glu410, which acts as the Proton donor. Phe436 serves as a coordination point for thiamine diphosphate. 3 residues coordinate substrate: His460, Asp468, and Arg519.

This sequence belongs to the transketolase family. Homodimer. Requires Mg(2+) as cofactor. It depends on Ca(2+) as a cofactor. The cofactor is Mn(2+). Co(2+) is required as a cofactor. Thiamine diphosphate serves as cofactor.

It catalyses the reaction D-sedoheptulose 7-phosphate + D-glyceraldehyde 3-phosphate = aldehydo-D-ribose 5-phosphate + D-xylulose 5-phosphate. It functions in the pathway carbohydrate biosynthesis; Calvin cycle. The protein operates within carbohydrate degradation; pentose phosphate pathway. In terms of biological role, catalyzes the transfer of a two-carbon ketol group from a ketose donor to an aldose acceptor, via a covalent intermediate with the cofactor thiamine pyrophosphate. This Staphylococcus epidermidis (strain ATCC 12228 / FDA PCI 1200) protein is Transketolase (tkt).